A 488-amino-acid polypeptide reads, in one-letter code: MINRQLSRLLLCSILGSTTLISGCALVRKDSAPHQQLKPEQIKLADDIHLASSGWPQAQWWKQLNDPQLDSLIQRTLSGSHPLAEAKLREEKAQSQADLLDAGSQLQVAALGMLNRQRVSANGFLSPYAMDAPALGMDGPYYTEATVGLFAGLDLDLWGVHRSAVAAAIGAHNAALAETAAVELSLTTGVAQLYYSMQASYQMLDLLEQTRDVIDYAVKAHQSKVAHGLEAQVPFHGARAQILAVDKQIAAVKGQITETRESLRALIGAGASDMPEIKPVALPRVQTGIPATLSYELLARRPDLQAMRWYVQASLDQVDSARALFYPSFDIKAFFGLDSIHLDTLFKKTSRQFNFIPGLKLPLFDGGRLNANLEGTRAASNMMIERYNQSVLNAVRDVAVNGTRLQTLNDEREMQAERVEATRFTQRAAEAAYQRGLTSRLQATEARLPVLAEEMSLLMLDSRRVIQSIQLMKSLGGGYQAAPIVEKK.

Positions 1 to 23 (MINRQLSRLLLCSILGSTTLISG) are cleaved as a signal peptide. A lipid anchor (N-palmitoyl cysteine) is attached at Cys-24. The S-diacylglycerol cysteine moiety is linked to residue Cys-24.

This sequence belongs to the outer membrane factor (OMF) (TC 1.B.17) family. As to quaternary structure, could be part of a tripartite efflux system composed of MdtN, MdtO and MdtP.

It is found in the cell outer membrane. Its function is as follows. Could be involved in resistance to puromycin, acriflavine and tetraphenylarsonium chloride. In Escherichia coli O6:H1 (strain CFT073 / ATCC 700928 / UPEC), this protein is Multidrug resistance outer membrane protein MdtP (mdtP).